The chain runs to 958 residues: Glycine dehydrogenase (decarboxylating) (958 aa).

The residue at position 705 (K705) is an N6-(pyridoxal phosphate)lysine.

The protein belongs to the GcvP family. As to quaternary structure, the glycine cleavage system is composed of four proteins: P, T, L and H. Requires pyridoxal 5'-phosphate as cofactor.

It catalyses the reaction N(6)-[(R)-lipoyl]-L-lysyl-[glycine-cleavage complex H protein] + glycine + H(+) = N(6)-[(R)-S(8)-aminomethyldihydrolipoyl]-L-lysyl-[glycine-cleavage complex H protein] + CO2. Functionally, the glycine cleavage system catalyzes the degradation of glycine. The P protein binds the alpha-amino group of glycine through its pyridoxal phosphate cofactor; CO(2) is released and the remaining methylamine moiety is then transferred to the lipoamide cofactor of the H protein. The protein is Glycine dehydrogenase (decarboxylating) of Bdellovibrio bacteriovorus (strain ATCC 15356 / DSM 50701 / NCIMB 9529 / HD100).